The following is a 234-amino-acid chain: Octanoyltransferase (234 aa).

The 187-residue stretch at 35-221 folds into the BPL/LPL catalytic domain; it reads DGAPELVWFL…AFQQVFASPL (187 aa). Substrate contacts are provided by residues 74–81, 150–152, and 163–165; these read RGGQYTYH, AIG, and GIS. The active-site Acyl-thioester intermediate is the Cys-181.

The protein belongs to the LipB family.

The protein localises to the cytoplasm. The catalysed reaction is octanoyl-[ACP] + L-lysyl-[protein] = N(6)-octanoyl-L-lysyl-[protein] + holo-[ACP] + H(+). Its pathway is protein modification; protein lipoylation via endogenous pathway; protein N(6)-(lipoyl)lysine from octanoyl-[acyl-carrier-protein]: step 1/2. Its function is as follows. Catalyzes the transfer of endogenously produced octanoic acid from octanoyl-acyl-carrier-protein onto the lipoyl domains of lipoate-dependent enzymes. Lipoyl-ACP can also act as a substrate although octanoyl-ACP is likely to be the physiological substrate. This chain is Octanoyltransferase, found in Hyphomonas neptunium (strain ATCC 15444).